A 170-amino-acid polypeptide reads, in one-letter code: Adenine phosphoribosyltransferase (170 aa).

This sequence belongs to the purine/pyrimidine phosphoribosyltransferase family. As to quaternary structure, homodimer.

It localises to the cytoplasm. It carries out the reaction AMP + diphosphate = 5-phospho-alpha-D-ribose 1-diphosphate + adenine. Its pathway is purine metabolism; AMP biosynthesis via salvage pathway; AMP from adenine: step 1/1. In terms of biological role, catalyzes a salvage reaction resulting in the formation of AMP, that is energically less costly than de novo synthesis. The protein is Adenine phosphoribosyltransferase of Acholeplasma laidlawii (strain PG-8A).